Here is an 86-residue protein sequence, read N- to C-terminus: RNA-binding protein Hfq (86 aa).

The region spanning 9–68 (DPYLNVLRKERIPVSIYLVNGIKLQGQVESFDQFVVLLKNTVSQMVYKHAISTVVPSRPV) is the Sm domain.

It belongs to the Hfq family. Homohexamer.

RNA chaperone that binds small regulatory RNA (sRNAs) and mRNAs to facilitate mRNA translational regulation in response to envelope stress, environmental stress and changes in metabolite concentrations. Also binds with high specificity to tRNAs. This chain is RNA-binding protein Hfq, found in Saccharophagus degradans (strain 2-40 / ATCC 43961 / DSM 17024).